The primary structure comprises 570 residues: Sulfite reductase [NADPH] hemoprotein beta-component (570 aa).

[4Fe-4S] cluster contacts are provided by Cys-434, Cys-440, Cys-479, and Cys-483. Residue Cys-483 participates in siroheme binding.

This sequence belongs to the nitrite and sulfite reductase 4Fe-4S domain family. Alpha(8)-beta(8). The alpha component is a flavoprotein, the beta component is a hemoprotein. It depends on siroheme as a cofactor. [4Fe-4S] cluster is required as a cofactor.

It carries out the reaction hydrogen sulfide + 3 NADP(+) + 3 H2O = sulfite + 3 NADPH + 4 H(+). It participates in sulfur metabolism; hydrogen sulfide biosynthesis; hydrogen sulfide from sulfite (NADPH route): step 1/1. In terms of biological role, component of the sulfite reductase complex that catalyzes the 6-electron reduction of sulfite to sulfide. This is one of several activities required for the biosynthesis of L-cysteine from sulfate. The chain is Sulfite reductase [NADPH] hemoprotein beta-component from Escherichia coli O127:H6 (strain E2348/69 / EPEC).